The following is a 305-amino-acid chain: Superkiller complex protein 8 (305 aa).

7 WD repeats span residues 14-57 (AHED…LELQ), 62-101 (GHQL…QIRA), 104-143 (AGPV…KEYS), 146-187 (TRGK…HTLE), 188-227 (GHAM…LAAT), 230-269 (GHGS…CVHT), and 272-305 (DHQD…DCPI).

Belongs to the SKI8 family. Component of the PAF1 complex. Component of the SKI complex.

It localises to the nucleus. The protein resides in the cytoplasm. Component of the PAF1 complex (PAF1C) which has multiple functions during transcription by RNA polymerase II and is implicated in regulation of development and maintenance of embryonic stem cell pluripotency. PAF1C associates with RNA polymerase II through interaction with POLR2A CTD non-phosphorylated and 'Ser-2'- and 'Ser-5'-phosphorylated forms and is involved in transcriptional elongation, acting both independently and synergistically with TCEA1 and in cooperation with the DSIF complex and HTATSF1. Also acts as a component of the SKI complex, a multiprotein complex that assists the RNA-degrading exosome during the mRNA decay and quality-control pathways. The SKI complex catalyzes mRNA extraction from 80S ribosomal complexes in the 3'-5' direction and channels mRNA to the cytosolic exosome for degradation. This Xenopus tropicalis (Western clawed frog) protein is Superkiller complex protein 8 (skic8).